The following is a 323-amino-acid chain: o-succinylbenzoate synthase (323 aa).

Lys-134 functions as the Proton donor in the catalytic mechanism. Mg(2+) contacts are provided by Asp-162, Glu-191, and Asp-214. The active-site Proton acceptor is Lys-236.

Belongs to the mandelate racemase/muconate lactonizing enzyme family. MenC type 1 subfamily. Requires a divalent metal cation as cofactor.

The catalysed reaction is (1R,6R)-6-hydroxy-2-succinyl-cyclohexa-2,4-diene-1-carboxylate = 2-succinylbenzoate + H2O. Its pathway is quinol/quinone metabolism; 1,4-dihydroxy-2-naphthoate biosynthesis; 1,4-dihydroxy-2-naphthoate from chorismate: step 4/7. It functions in the pathway quinol/quinone metabolism; menaquinone biosynthesis. Converts 2-succinyl-6-hydroxy-2,4-cyclohexadiene-1-carboxylate (SHCHC) to 2-succinylbenzoate (OSB). The protein is o-succinylbenzoate synthase of Pectobacterium atrosepticum (strain SCRI 1043 / ATCC BAA-672) (Erwinia carotovora subsp. atroseptica).